The sequence spans 310 residues: Small ribosomal subunit biogenesis GTPase RsgA (310 aa).

Residues 77-238 enclose the CP-type G domain; sequence LSKQSHILAA…IIDTPGIKGF (162 aa). GTP-binding positions include 126–129 and 180–188; these read NKTD and GNSGVGKST. Positions 262, 267, 269, and 275 each coordinate Zn(2+).

Belongs to the TRAFAC class YlqF/YawG GTPase family. RsgA subfamily. Monomer. Associates with 30S ribosomal subunit, binds 16S rRNA. The cofactor is Zn(2+).

Its subcellular location is the cytoplasm. In terms of biological role, one of several proteins that assist in the late maturation steps of the functional core of the 30S ribosomal subunit. Helps release RbfA from mature subunits. May play a role in the assembly of ribosomal proteins into the subunit. Circularly permuted GTPase that catalyzes slow GTP hydrolysis, GTPase activity is stimulated by the 30S ribosomal subunit. The chain is Small ribosomal subunit biogenesis GTPase RsgA from Phocaeicola vulgatus (strain ATCC 8482 / DSM 1447 / JCM 5826 / CCUG 4940 / NBRC 14291 / NCTC 11154) (Bacteroides vulgatus).